The sequence spans 81 residues: UPF0298 protein SAK_1599 (81 aa).

This sequence belongs to the UPF0298 family.

It is found in the cytoplasm. This chain is UPF0298 protein SAK_1599, found in Streptococcus agalactiae serotype Ia (strain ATCC 27591 / A909 / CDC SS700).